Here is a 415-residue protein sequence, read N- to C-terminus: Multifunctional CCA protein (415 aa).

G8 and R11 together coordinate ATP. CTP contacts are provided by G8 and R11. D21 and D23 together coordinate Mg(2+). 3 residues coordinate ATP: R91, R143, and R146. Positions 91, 143, and 146 each coordinate CTP. Positions 232–333 constitute an HD domain; it reads TGVHVMMVID…TRLLERCDAL (102 aa).

The protein belongs to the tRNA nucleotidyltransferase/poly(A) polymerase family. Bacterial CCA-adding enzyme type 1 subfamily. In terms of assembly, monomer. Can also form homodimers and oligomers. It depends on Mg(2+) as a cofactor. Ni(2+) serves as cofactor.

It carries out the reaction a tRNA precursor + 2 CTP + ATP = a tRNA with a 3' CCA end + 3 diphosphate. It catalyses the reaction a tRNA with a 3' CCA end + 2 CTP + ATP = a tRNA with a 3' CCACCA end + 3 diphosphate. Functionally, catalyzes the addition and repair of the essential 3'-terminal CCA sequence in tRNAs without using a nucleic acid template. Adds these three nucleotides in the order of C, C, and A to the tRNA nucleotide-73, using CTP and ATP as substrates and producing inorganic pyrophosphate. tRNA 3'-terminal CCA addition is required both for tRNA processing and repair. Also involved in tRNA surveillance by mediating tandem CCA addition to generate a CCACCA at the 3' terminus of unstable tRNAs. While stable tRNAs receive only 3'-terminal CCA, unstable tRNAs are marked with CCACCA and rapidly degraded. The sequence is that of Multifunctional CCA protein from Cupriavidus pinatubonensis (strain JMP 134 / LMG 1197) (Cupriavidus necator (strain JMP 134)).